Reading from the N-terminus, the 466-residue chain is Phytase A (466 aa).

Residues 1–19 (MGFLAIVLSVALLFRSTSG) form the signal peptide. A disulfide bond links C31 and C40. Residues Y51, R81, H82, R85, and T88 each coordinate 1D-myo-inositol hexakisphosphate. Cystine bridges form between C71–C414, C215–C465, C264–C282, and C436–C444. H82 functions as the Nucleophile in the catalytic mechanism. The N-linked (GlcNAc...) asparagine glycan is linked to N120. A 1D-myo-inositol hexakisphosphate-binding site is contributed by R165. N-linked (GlcNAc...) asparagine glycans are attached at residues N207 and N230. K301 is a binding site for 1D-myo-inositol hexakisphosphate. 2 N-linked (GlcNAc...) asparagine glycosylation sites follow: N339 and N352. Residues H361 and D362 each contribute to the 1D-myo-inositol hexakisphosphate site. Residue N376 is glycosylated (N-linked (GlcNAc...) asparagine).

This sequence belongs to the histidine acid phosphatase family. Monomer.

It is found in the secreted. The catalysed reaction is 1D-myo-inositol hexakisphosphate + H2O = 1D-myo-inositol 1,2,4,5,6-pentakisphosphate + phosphate. It catalyses the reaction 1D-myo-inositol 1,2,4,5,6-pentakisphosphate + H2O = 1D-myo-inositol 1,2,5,6-tetrakisphosphate + phosphate. The enzyme catalyses 1D-myo-inositol 1,2,5,6-tetrakisphosphate + H2O = 1D-myo-inositol 1,2,6-trisphosphate + phosphate. It carries out the reaction 1D-myo-inositol 1,2,6-trisphosphate + H2O = 1D-myo-inositol 1,2-bisphosphate + phosphate. The catalysed reaction is 1D-myo-inositol 1,2-bisphosphate + H2O = 1D-myo-inositol 2-phosphate + phosphate. Functionally, catalyzes the phosphate monoester hydrolysis of phytic acid (myo-inositol hexakisphosphate), which results in the stepwise formation of myo-inositol pentakis-, tetrakis-, tris-, bis-, and monophosphates, as well as the liberation of inorganic phosphate. Myo-inositol 2-monophosphate is the end product. Has a broad substrate specificity and is also able to dephosphorylate other classic acid phosphatase substrates such as p-nitrophenyl phosphate, phenyl phosphate, fructose 1,6-bisphosphate, glucose 6-phosphate, 3-phosphoglycerate, as well as ADP and ATP. In Aspergillus terreus, this protein is Phytase A.